The sequence spans 353 residues: Farnesyl pyrophosphate synthase (353 aa).

Positions 57, 60, and 96 each coordinate isopentenyl diphosphate. The residue at position 57 (lysine 57) is an N6-(2-hydroxyisobutyryl)lysine; alternate. N6-acetyllysine; alternate is present on lysine 57. Mg(2+) is bound by residues aspartate 103 and aspartate 107. Residue arginine 112 coordinates dimethylallyl diphosphate. Arginine 113 contacts isopentenyl diphosphate. Dimethylallyl diphosphate contacts are provided by lysine 200, threonine 201, glutamine 240, lysine 257, and lysine 266.

This sequence belongs to the FPP/GGPP synthase family. As to quaternary structure, homodimer. Interacts with RSAD2. Mg(2+) is required as a cofactor. As to expression, testis, liver, kidney, brain and adrenal gland.

Its subcellular location is the cytoplasm. It carries out the reaction isopentenyl diphosphate + dimethylallyl diphosphate = (2E)-geranyl diphosphate + diphosphate. The catalysed reaction is isopentenyl diphosphate + (2E)-geranyl diphosphate = (2E,6E)-farnesyl diphosphate + diphosphate. The protein operates within isoprenoid biosynthesis; farnesyl diphosphate biosynthesis; farnesyl diphosphate from geranyl diphosphate and isopentenyl diphosphate: step 1/1. Its pathway is isoprenoid biosynthesis; geranyl diphosphate biosynthesis; geranyl diphosphate from dimethylallyl diphosphate and isopentenyl diphosphate: step 1/1. With respect to regulation, inactivated by interferon-induced RSAD2. This inactivation may result of disruption of lipid rafts at the plasma membrane, and thus have an antiviral effect since many enveloped viruses need lipid rafts to bud efficiently out of the cell. Functionally, key enzyme in isoprenoid biosynthesis which catalyzes the formation of farnesyl diphosphate (FPP), a precursor for several classes of essential metabolites including sterols, dolichols, carotenoids, and ubiquinones. FPP also serves as substrate for protein farnesylation and geranylgeranylation. Catalyzes the sequential condensation of isopentenyl pyrophosphate with the allylic pyrophosphates, dimethylallyl pyrophosphate, and then with the resultant geranylpyrophosphate to the ultimate product farnesyl pyrophosphate. This is Farnesyl pyrophosphate synthase (Fdps) from Rattus norvegicus (Rat).